We begin with the raw amino-acid sequence, 597 residues long: FERM domain-containing protein 3 (597 aa).

In terms of domain architecture, FERM spans 32–312 (MRCTIRLLDD…ENQAFYKYAK (281 aa)). The disordered stretch occupies residues 383–403 (LLPSPSEQEEELPLGEGVPLP). A helical transmembrane segment spans residues 531–551 (LLVVGLGLLLFVFPLLLLLLE).

Ovary-specific.

It localises to the membrane. Putative tumor suppressor gene that may be implicated in the origin and progression of lung cancer. The chain is FERM domain-containing protein 3 (FRMD3) from Homo sapiens (Human).